Consider the following 71-residue polypeptide: Ubiquinol-cytochrome c reductase complex assembly factor 6 (71 aa).

Over 1 to 8 (MPAGVPMS) the chain is Mitochondrial matrix. The helical; Signal-anchor for type II membrane protein transmembrane segment at 9–25 (TYLKMFAASLLAMCAGA) threads the bilayer. Residues 26–71 (EVVHRYYRPDLTIPEIPPKRGELKTELLGLKERKHKPQVSQQEELK) are Mitochondrial intermembrane-facing.

It belongs to the UQCC6 family. As to quaternary structure, interacts with UQCRC1. Interacts with UQCRQ. Interacts with UQCC5. Forms a complex, named COMB/coordinator of mitochondrial CYTB biogenesis, composed of UQCC1, UQCC2, UQCC4, UQCC5 and UQCC6; stabilizes nascent cytochrome b/MT-CYB and promotes its membrane insertion. Forms a complex, named COMA, composed of UQCC1, UQCC2 and UQCC4; activates MT-CYB translation. Forms a complex, named COMC, composed of UQCC1, UQCC2; UQCC3 and UQCC4; mediates MT-CYB hemylation and association with the first nuclear-encoded complex III subunit UQCRQ. Interacts with MT-CYB. As to expression, cardiac and skeletal muscle (at protein level).

It localises to the mitochondrion inner membrane. Required for the assembly and stability of the mitochondrial ubiquinol-cytochrome c reductase complex (complex III (CIII) or cytochrome b-c1 complex), a multisubunit transmembrane complex that is part of the mitochondrial electron transport chain (ETC) which drives oxidative phosphorylation. Mediates early complex III biogenesis. Participates in regulating the levels of electron transport chain proteins, and therefore energy supply, in response to changes in energy demand. Also required for cytochrome c oxidase complex (complex IV) assembly. In Homo sapiens (Human), this protein is Ubiquinol-cytochrome c reductase complex assembly factor 6.